The chain runs to 281 residues: Insecticidal crystal toxin protein (281 aa).

9 antigenic epitope regions span residues 54-78 (NYSHILSFIKSLSIPATYKTQVYTF), 91-104 (IYTHLTTQIPAVKA), 108-116 (GTASKVVQG), 131-148 (FKITCQHSNFQQSYFIRI), 160-172 (AVINLSIPGVAEL), 189-196 (KYKDFQYL), 208-216 (QNISLVFNR), 221-236 (TNTTVLIDKIEFLPIT), and 247-256 (KLETVQQIIN).

Belongs to the delta endotoxin family.

Its function is as follows. Promotes colloidosmotic lysis by binding to the midgut epithelial cells of insects. Active against Mamestra brassicae. The protein is Insecticidal crystal toxin protein of Bacillus thuringiensis subsp. kurstaki.